A 173-amino-acid chain; its full sequence is Flagellar biosynthetic protein FliV (173 aa).

Belongs to the FliB family.

In terms of biological role, required for the secretion of flagellin and expression of motility. This is Flagellar biosynthetic protein FliV (fliV) from Salmonella muenchen.